The following is a 291-amino-acid chain: Protein pxr1 (291 aa).

Basic residues predominate over residues 1–11 (MGLAAPRKRTK). Disordered stretches follow at residues 1 to 26 (MGLA…RSTD) and 146 to 268 (LVPP…FRGR). 2 stretches are compositionally biased toward polar residues: residues 15 to 25 (DPNNTTWSRST) and 146 to 156 (LVPPTSQNGQA). In terms of domain architecture, G-patch spans 25 to 79 (TDGFGHRILKAQGWTPGSFLGPRNAAHSDLFTTASASHIRVVLKDDNLGLGARPK). Over residues 194 to 205 (ETNSRGSREKER) the composition is skewed to basic and acidic residues. Basic residues predominate over residues 206–219 (KREKRQMRRDKKRK). Basic and acidic residues predominate over residues 230–247 (MQEKTRVQGPSEDVKPTE).

This sequence belongs to the PINX1 family.

The protein resides in the nucleus. The protein localises to the nucleolus. Functionally, involved in rRNA-processing at A0, A1 and A2 sites and negatively regulates telomerase. The protein is Protein pxr1 (pxr1) of Aspergillus clavatus (strain ATCC 1007 / CBS 513.65 / DSM 816 / NCTC 3887 / NRRL 1 / QM 1276 / 107).